The primary structure comprises 257 residues: Capsid protein (257 aa).

Positions 3–20 match the Bipartite nuclear localization signal motif; the sequence is KRNYDTAFSTPMSNVRRR. The short motif at 41-55 is the Nuclear localization signal element; the sequence is KRRRWTNRPMWRKPR. A zinc finger lies at 69–86; that stretch reads CEGPCKVQSFEAKHDISH. A Nuclear export signal motif is present at residues 102 to 123; sequence ITHRVGKRFCVKSIWVTGKIWM. The Bipartite nuclear localization signal motif lies at 201 to 248; that stretch reads SKFYRVNNYVVYNHQEAAKYENHTENALLLYMACTHASNPVYATLKIR.

It belongs to the geminiviridae capsid protein family. In terms of assembly, homomultimer. Binds to single-stranded and double-stranded viral DNA. Interacts (via nuclear localization signals) with host importin alpha-1a.

It localises to the virion. The protein resides in the host nucleus. Its function is as follows. Encapsidates the viral DNA into characteristic twinned ('geminate') particles. Binds the genomic viral ssDNA and shuttles it into and out of the cell nucleus. The CP of bipartite geminiviruses is not required for cell-to-cell or systemic movement. The protein is Capsid protein of Glycine max (Soybean).